The primary structure comprises 202 residues: LexA repressor (202 aa).

The H-T-H motif DNA-binding region spans 28-48 (RAEIAQRLGFRSPNAAEEHLK). Active-site for autocatalytic cleavage activity residues include serine 119 and lysine 156.

It belongs to the peptidase S24 family. As to quaternary structure, homodimer.

The catalysed reaction is Hydrolysis of Ala-|-Gly bond in repressor LexA.. Its function is as follows. Represses a number of genes involved in the response to DNA damage (SOS response), including recA and lexA. Binds to the 16 bp palindromic sequence 5'-CTGTATATATATACAG-3'. In the presence of single-stranded DNA, RecA interacts with LexA causing an autocatalytic cleavage which disrupts the DNA-binding part of LexA, leading to derepression of the SOS regulon and eventually DNA repair. This chain is LexA repressor, found in Yersinia pseudotuberculosis serotype O:1b (strain IP 31758).